The sequence spans 188 residues: Probable nicotinate-nucleotide adenylyltransferase (188 aa).

This sequence belongs to the NadD family.

It catalyses the reaction nicotinate beta-D-ribonucleotide + ATP + H(+) = deamido-NAD(+) + diphosphate. Its pathway is cofactor biosynthesis; NAD(+) biosynthesis; deamido-NAD(+) from nicotinate D-ribonucleotide: step 1/1. Catalyzes the reversible adenylation of nicotinate mononucleotide (NaMN) to nicotinic acid adenine dinucleotide (NaAD). The sequence is that of Probable nicotinate-nucleotide adenylyltransferase from Acholeplasma laidlawii (strain PG-8A).